Reading from the N-terminus, the 144-residue chain is Large ribosomal subunit protein uL15 (144 aa).

A disordered region spans residues 1–53; it reads MRLNTLSPAEGAKHSAKRLGRGIGSGLGKTGGRGHKGQKSRTGGGVRRGFEGG. Residues 21–31 show a composition bias toward gly residues; the sequence is RGIGSGLGKTG.

Belongs to the universal ribosomal protein uL15 family. As to quaternary structure, part of the 50S ribosomal subunit.

Functionally, binds to the 23S rRNA. The sequence is that of Large ribosomal subunit protein uL15 from Haemophilus influenzae (strain ATCC 51907 / DSM 11121 / KW20 / Rd).